The chain runs to 450 residues: Asparagine--tRNA ligase (450 aa).

The protein belongs to the class-II aminoacyl-tRNA synthetase family. In terms of assembly, homodimer.

Its subcellular location is the cytoplasm. It carries out the reaction tRNA(Asn) + L-asparagine + ATP = L-asparaginyl-tRNA(Asn) + AMP + diphosphate + H(+). The polypeptide is Asparagine--tRNA ligase (Enterococcus faecalis (strain ATCC 700802 / V583)).